The sequence spans 849 residues: Lysine-specific histone demethylase 1 homolog 1 (849 aa).

Residues 1-118 (MEEGSEAQPP…RRRRKKQFPG (118 aa)) are disordered. Low complexity-rich tracts occupy residues 34 to 67 (GQAA…AADA) and 89 to 103 (PTSS…VDDS). Residues 106–115 (ARKRRRRKKQ) show a composition bias toward basic residues. An SWIRM domain is found at 159 to 260 (ARELDAEALI…FGLAPSVISL (102 aa)). Residues E300, R302, R308, and E688 each contribute to the FAD site.

Belongs to the flavin monoamine oxidase family. The cofactor is FAD.

Its function is as follows. Probable histone demethylase. This Oryza sativa subsp. japonica (Rice) protein is Lysine-specific histone demethylase 1 homolog 1.